The primary structure comprises 161 residues: ATP synthase subunit b 1 (161 aa).

Residues 5–25 (PETWVAIAFLLLMGVFAYVGV) traverse the membrane as a helical segment.

It belongs to the ATPase B chain family. As to quaternary structure, F-type ATPases have 2 components, F(1) - the catalytic core - and F(0) - the membrane proton channel. F(1) has five subunits: alpha(3), beta(3), gamma(1), delta(1), epsilon(1). F(0) has three main subunits: a(1), b(2) and c(10-14). The alpha and beta chains form an alternating ring which encloses part of the gamma chain. F(1) is attached to F(0) by a central stalk formed by the gamma and epsilon chains, while a peripheral stalk is formed by the delta and b chains.

It is found in the cell inner membrane. Functionally, f(1)F(0) ATP synthase produces ATP from ADP in the presence of a proton or sodium gradient. F-type ATPases consist of two structural domains, F(1) containing the extramembraneous catalytic core and F(0) containing the membrane proton channel, linked together by a central stalk and a peripheral stalk. During catalysis, ATP synthesis in the catalytic domain of F(1) is coupled via a rotary mechanism of the central stalk subunits to proton translocation. Its function is as follows. Component of the F(0) channel, it forms part of the peripheral stalk, linking F(1) to F(0). In Nitrobacter winogradskyi (strain ATCC 25391 / DSM 10237 / CIP 104748 / NCIMB 11846 / Nb-255), this protein is ATP synthase subunit b 1.